The chain runs to 275 residues: 4-diphosphocytidyl-2-C-methyl-D-erythritol kinase (275 aa).

Lys-14 is a catalytic residue. 94 to 104 (PMEAGLGGGSA) contacts ATP. Asp-134 is a catalytic residue.

Belongs to the GHMP kinase family. IspE subfamily.

It catalyses the reaction 4-CDP-2-C-methyl-D-erythritol + ATP = 4-CDP-2-C-methyl-D-erythritol 2-phosphate + ADP + H(+). Its pathway is isoprenoid biosynthesis; isopentenyl diphosphate biosynthesis via DXP pathway; isopentenyl diphosphate from 1-deoxy-D-xylulose 5-phosphate: step 3/6. Catalyzes the phosphorylation of the position 2 hydroxy group of 4-diphosphocytidyl-2C-methyl-D-erythritol. This is 4-diphosphocytidyl-2-C-methyl-D-erythritol kinase from Thermosipho africanus (strain TCF52B).